Consider the following 848-residue polypeptide: Crooked neck-like protein 1 (848 aa).

Threonine 2 is modified (N-acetylalanine). The disordered stretch occupies residues 81 to 106 (RSSRTPHSTRCRKEDAQPGHHGNGAA). 17 HAT repeats span residues 222 to 254 (DYKL…WEES), 256 to 288 (KEIQ…MEMK), 290 to 322 (RQVN…MEEM), 324 to 355 (GNVA…FELR), 357 to 388 (KEVD…FEEK), 390 to 425 (AYFA…FEEN), 427 to 461 (KEFE…FEKK), 471 to 503 (IIVS…LVES), 505 to 539 (AEAE…LWIN), 549 to 585 (KDPE…FEIR), 587 to 618 (KNLS…LELQ), 620 to 652 (REFD…LETI), 654 to 688 (GDID…FEIE), 690 to 721 (EETE…FELS), 726 to 767 (GSLT…EFGT), 769 to 807 (SDKE…YIFP), and 809 to 834 (DAAN…EKED). Positions 411–628 (MDEHLYVAFA…LREFDRCRKL (218 aa)) are mediates interaction with HSP90. The residue at position 503 (serine 503) is a Phosphoserine. The interval 827–848 (KQQQEKEDAEHHPDEDVDESES) is disordered. Residues 828–840 (QQQEKEDAEHHPD) show a composition bias toward basic and acidic residues.

Belongs to the crooked-neck family. Identified in the spliceosome C complex. Present in a spliceosome complex assembled in vitro containing CRNKL1, HPRP8BP and SNRPB2. Component of the minor spliceosome, which splices U12-type introns. Isoform 2 seems to be predominant in the spliceosome complex. Interacts with PPIL2 (via the PPIase cyclophilin-type domain); they may form a trimeric complex with HSP90. As to expression, widely expressed. Highly expressed in testis. Not detected in brain and lung.

The protein localises to the nucleus. It is found in the nucleus speckle. Its function is as follows. Involved in pre-mRNA splicing process. As a component of the minor spliceosome, involved in the splicing of U12-type introns in pre-mRNAs. This is Crooked neck-like protein 1 (CRNKL1) from Homo sapiens (Human).